The following is an 84-amino-acid chain: Putative membrane protein insertion efficiency factor (84 aa).

This sequence belongs to the UPF0161 family.

The protein localises to the cell inner membrane. Could be involved in insertion of integral membrane proteins into the membrane. The sequence is that of Putative membrane protein insertion efficiency factor from Shewanella frigidimarina (strain NCIMB 400).